A 131-amino-acid polypeptide reads, in one-letter code: Neurophysin 2 (131 aa).

7 disulfides stabilise this stretch: Cys10–Cys55, Cys13–Cys27, Cys21–Cys45, Cys28–Cys35, Cys62–Cys74, Cys68–Cys86, and Cys75–Cys80.

It belongs to the vasopressin/oxytocin family.

The protein resides in the secreted. Functionally, neurophysin 2 specifically binds vasopressin. The polypeptide is Neurophysin 2 (Anser anser anser (Western greylag goose)).